Consider the following 156-residue polypeptide: Small ribosomal subunit protein uS7 (156 aa).

Belongs to the universal ribosomal protein uS7 family. As to quaternary structure, part of the 30S ribosomal subunit. Contacts proteins S9 and S11.

In terms of biological role, one of the primary rRNA binding proteins, it binds directly to 16S rRNA where it nucleates assembly of the head domain of the 30S subunit. Is located at the subunit interface close to the decoding center, probably blocks exit of the E-site tRNA. The sequence is that of Small ribosomal subunit protein uS7 from Clostridium acetobutylicum (strain ATCC 824 / DSM 792 / JCM 1419 / IAM 19013 / LMG 5710 / NBRC 13948 / NRRL B-527 / VKM B-1787 / 2291 / W).